Here is a 109-residue protein sequence, read N- to C-terminus: Small ribosomal subunit protein uS17 (109 aa).

It belongs to the universal ribosomal protein uS17 family. In terms of assembly, part of the 30S ribosomal subunit.

One of the primary rRNA binding proteins, it binds specifically to the 5'-end of 16S ribosomal RNA. The polypeptide is Small ribosomal subunit protein uS17 (Halobacterium salinarum (strain ATCC 29341 / DSM 671 / R1)).